The primary structure comprises 403 residues: Acetate kinase (403 aa).

Asn-7 is a binding site for Mg(2+). ATP is bound at residue Lys-14. Arg-95 contacts substrate. Asp-152 functions as the Proton donor/acceptor in the catalytic mechanism. ATP-binding positions include 212-216, 286-288, and 335-339; these read HLGNG, DMR, and GIGEN. Glu-389 is a binding site for Mg(2+).

It belongs to the acetokinase family. In terms of assembly, homodimer. Mg(2+) serves as cofactor. The cofactor is Mn(2+).

It is found in the cytoplasm. It carries out the reaction acetate + ATP = acetyl phosphate + ADP. The protein operates within metabolic intermediate biosynthesis; acetyl-CoA biosynthesis; acetyl-CoA from acetate: step 1/2. Catalyzes the formation of acetyl phosphate from acetate and ATP. Can also catalyze the reverse reaction. The sequence is that of Acetate kinase from Desulfovibrio desulfuricans (strain ATCC 27774 / DSM 6949 / MB).